We begin with the raw amino-acid sequence, 343 residues long: Phosphoribosylformylglycinamidine cyclo-ligase (343 aa).

This sequence belongs to the AIR synthase family.

The protein resides in the cytoplasm. It carries out the reaction 2-formamido-N(1)-(5-O-phospho-beta-D-ribosyl)acetamidine + ATP = 5-amino-1-(5-phospho-beta-D-ribosyl)imidazole + ADP + phosphate + H(+). The protein operates within purine metabolism; IMP biosynthesis via de novo pathway; 5-amino-1-(5-phospho-D-ribosyl)imidazole from N(2)-formyl-N(1)-(5-phospho-D-ribosyl)glycinamide: step 2/2. This Parasynechococcus marenigrum (strain WH8102) protein is Phosphoribosylformylglycinamidine cyclo-ligase.